A 545-amino-acid chain; its full sequence is Ribulokinase (545 aa).

This sequence belongs to the ribulokinase family.

The enzyme catalyses D-ribulose + ATP = D-ribulose 5-phosphate + ADP + H(+). It catalyses the reaction L-ribulose + ATP = L-ribulose 5-phosphate + ADP + H(+). Its pathway is carbohydrate degradation; L-arabinose degradation via L-ribulose; D-xylulose 5-phosphate from L-arabinose (bacterial route): step 2/3. The protein is Ribulokinase of Staphylococcus aureus (strain MSSA476).